Reading from the N-terminus, the 179-residue chain is ATP synthase subunit b, chloroplastic (179 aa).

Residues 28–46 traverse the membrane as a helical segment; the sequence is IINIAALVGILIYAGRDFL.

This sequence belongs to the ATPase B chain family. In terms of assembly, F-type ATPases have 2 components, F(1) - the catalytic core - and F(0) - the membrane proton channel. F(1) has five subunits: alpha(3), beta(3), gamma(1), delta(1), epsilon(1). F(0) has four main subunits: a(1), b(1), b'(1) and c(10-14). The alpha and beta chains form an alternating ring which encloses part of the gamma chain. F(1) is attached to F(0) by a central stalk formed by the gamma and epsilon chains, while a peripheral stalk is formed by the delta, b and b' chains.

The protein localises to the plastid. It is found in the chloroplast thylakoid membrane. F(1)F(0) ATP synthase produces ATP from ADP in the presence of a proton or sodium gradient. F-type ATPases consist of two structural domains, F(1) containing the extramembraneous catalytic core and F(0) containing the membrane proton channel, linked together by a central stalk and a peripheral stalk. During catalysis, ATP synthesis in the catalytic domain of F(1) is coupled via a rotary mechanism of the central stalk subunits to proton translocation. Its function is as follows. Component of the F(0) channel, it forms part of the peripheral stalk, linking F(1) to F(0). This is ATP synthase subunit b, chloroplastic from Trieres chinensis (Marine centric diatom).